Reading from the N-terminus, the 120-residue chain is Ribosome-binding factor A (120 aa).

The protein belongs to the RbfA family. As to quaternary structure, monomer. Binds 30S ribosomal subunits, but not 50S ribosomal subunits or 70S ribosomes.

It localises to the cytoplasm. In terms of biological role, one of several proteins that assist in the late maturation steps of the functional core of the 30S ribosomal subunit. Associates with free 30S ribosomal subunits (but not with 30S subunits that are part of 70S ribosomes or polysomes). Required for efficient processing of 16S rRNA. May interact with the 5'-terminal helix region of 16S rRNA. This is Ribosome-binding factor A from Dictyoglomus thermophilum (strain ATCC 35947 / DSM 3960 / H-6-12).